Here is a 155-residue protein sequence, read N- to C-terminus: 1,4-dihydroxy-2-naphthoyl-CoA hydrolase (155 aa).

Aspartate 27 is an active-site residue.

It belongs to the 4-hydroxybenzoyl-CoA thioesterase family. DHNA-CoA hydrolase subfamily.

The catalysed reaction is 1,4-dihydroxy-2-naphthoyl-CoA + H2O = 1,4-dihydroxy-2-naphthoate + CoA + H(+). It functions in the pathway cofactor biosynthesis; phylloquinone biosynthesis. Its pathway is quinol/quinone metabolism; 1,4-dihydroxy-2-naphthoate biosynthesis; 1,4-dihydroxy-2-naphthoate from chorismate: step 7/7. Catalyzes the hydrolysis of 1,4-dihydroxy-2-naphthoyl-CoA (DHNA-CoA) to 1,4-dihydroxy-2-naphthoate (DHNA), a reaction involved in phylloquinone (vitamin K1) biosynthesis. The sequence is that of 1,4-dihydroxy-2-naphthoyl-CoA hydrolase from Prochlorococcus marinus (strain NATL2A).